The primary structure comprises 380 residues: 8-amino-7-oxononanoate synthase (380 aa).

Arg-26 lines the substrate pocket. 104-105 (GY) is a pyridoxal 5'-phosphate binding site. His-129 provides a ligand contact to substrate. Pyridoxal 5'-phosphate contacts are provided by residues Ser-175, 200–203 (DEAH), and 232–235 (TLSK). Lys-235 is subject to N6-(pyridoxal phosphate)lysine. Substrate is bound at residue Thr-345.

The protein belongs to the class-II pyridoxal-phosphate-dependent aminotransferase family. BioF subfamily. In terms of assembly, homodimer. The cofactor is pyridoxal 5'-phosphate.

The enzyme catalyses 6-carboxyhexanoyl-[ACP] + L-alanine + H(+) = (8S)-8-amino-7-oxononanoate + holo-[ACP] + CO2. It participates in cofactor biosynthesis; biotin biosynthesis. In terms of biological role, catalyzes the decarboxylative condensation of pimeloyl-[acyl-carrier protein] and L-alanine to produce 8-amino-7-oxononanoate (AON), [acyl-carrier protein], and carbon dioxide. The polypeptide is 8-amino-7-oxononanoate synthase (Mycolicibacterium vanbaalenii (strain DSM 7251 / JCM 13017 / BCRC 16820 / KCTC 9966 / NRRL B-24157 / PYR-1) (Mycobacterium vanbaalenii)).